The chain runs to 449 residues: Glucose-6-phosphate isomerase (449 aa).

The Proton donor role is filled by E291. Residues H312 and K426 contribute to the active site.

Belongs to the GPI family.

The protein localises to the cytoplasm. It catalyses the reaction alpha-D-glucose 6-phosphate = beta-D-fructose 6-phosphate. Its pathway is carbohydrate biosynthesis; gluconeogenesis. It participates in carbohydrate degradation; glycolysis; D-glyceraldehyde 3-phosphate and glycerone phosphate from D-glucose: step 2/4. In terms of biological role, catalyzes the reversible isomerization of glucose-6-phosphate to fructose-6-phosphate. This is Glucose-6-phosphate isomerase from Streptococcus pyogenes serotype M18 (strain MGAS8232).